Reading from the N-terminus, the 289-residue chain is tRNA pseudouridine synthase A (289 aa).

Asp-67 (nucleophile) is an active-site residue. Tyr-125 is a binding site for substrate.

The protein belongs to the tRNA pseudouridine synthase TruA family. As to quaternary structure, homodimer.

The catalysed reaction is uridine(38/39/40) in tRNA = pseudouridine(38/39/40) in tRNA. Its function is as follows. Formation of pseudouridine at positions 38, 39 and 40 in the anticodon stem and loop of transfer RNAs. This Prochlorococcus marinus (strain MIT 9211) protein is tRNA pseudouridine synthase A.